Here is a 207-residue protein sequence, read N- to C-terminus: Outer-membrane lipoprotein carrier protein (207 aa).

Residues 1 to 21 (MRLIRMLLLPVLAVTTLSAHA) form the signal peptide.

The protein belongs to the LolA family. In terms of assembly, monomer.

The protein resides in the periplasm. Its function is as follows. Participates in the translocation of lipoproteins from the inner membrane to the outer membrane. Only forms a complex with a lipoprotein if the residue after the N-terminal Cys is not an aspartate (The Asp acts as a targeting signal to indicate that the lipoprotein should stay in the inner membrane). This chain is Outer-membrane lipoprotein carrier protein, found in Pseudomonas fluorescens (strain ATCC BAA-477 / NRRL B-23932 / Pf-5).